Consider the following 978-residue polypeptide: Chaperone protein ClpB2, chloroplastic (978 aa).

The transit peptide at 1–76 (MAAAPPLAAG…RMPPRTLSVR (76 aa)) directs the protein to the chloroplast. Positions 85-229 (TQQEFTEMAW…KTAIESIRGK (145 aa)) constitute a Clp R domain. Repeat regions lie at residues 89–154 (FTEM…IQRQ) and 166–229 (LGRD…IRGK). Residues 244–492 (LDKYGKDLTA…KLKMEITSKP (249 aa)) form an i region. ATP is bound by residues 289–296 (GEPGVGKT) and 692–699 (GPTGVGKT). An II region spans residues 618–809 (VTQDDIAEIV…IIIMTSNVGS (192 aa)).

Belongs to the ClpA/ClpB family.

Its subcellular location is the plastid. It localises to the chloroplast. Its function is as follows. Molecular chaperone that may play a role in chloroplast development. This chain is Chaperone protein ClpB2, chloroplastic (CLPB2), found in Oryza sativa subsp. japonica (Rice).